Consider the following 473-residue polypeptide: mRNA export factor ICP27 homolog (473 aa).

Disordered stretches follow at residues 57-81 (QELL…NSIY) and 123-143 (QTKR…NFPM). Zn(2+) contacts are provided by Cys362, His438, Cys442, and Cys447. The CHC2-type zinc-finger motif lies at 362–447 (CKYGTEKRSM…HTRRCSDPAC (86 aa)).

It belongs to the HHV-1 ICP27 protein family. As to quaternary structure, associates in a complex with RNA, and host export factors NXF1/TAP and ALYREF; these interactions allow nuclear export of viral transcripts.

The protein resides in the host cytoplasm. It localises to the host nucleus. Its function is as follows. Multifunctional regulator of the expression of viral genes that mediates nuclear export of viral intronless mRNAs. This immediate early (EI) protein promotes the nuclear export of viral intronless mRNAs by interacting with mRNAs and host NXF1/TAP. This is mRNA export factor ICP27 homolog from Gallus gallus (Chicken).